The chain runs to 168 residues: Cell division inhibitor SulA (168 aa).

The tract at residues A105–Y111 is ftsZ binding.

The protein belongs to the SulA family. As to quaternary structure, interacts with FtsZ. In terms of processing, is rapidly cleaved and degraded by the Lon protease once DNA damage is repaired.

Component of the SOS system and an inhibitor of cell division. Accumulation of SulA causes rapid cessation of cell division and the appearance of long, non-septate filaments. In the presence of GTP, binds a polymerization-competent form of FtsZ in a 1:1 ratio, thus inhibiting FtsZ polymerization and therefore preventing it from participating in the assembly of the Z ring. This mechanism prevents the premature segregation of damaged DNA to daughter cells during cell division. This Erwinia pyrifoliae (strain DSM 12163 / CIP 106111 / Ep16/96) protein is Cell division inhibitor SulA.